A 377-amino-acid chain; its full sequence is uncharacterized protein (377 aa).

5 disordered regions span residues 10 to 79 (YSDG…NVNN), 91 to 141 (KKNN…DKEE), 182 to 257 (EAKK…TTTT), 265 to 284 (ENENQEKENNDNDNDNEPIE), and 289 to 326 (LEFNKFEEKPIKEVKVNTASSNKRNKKRNNPKKVKEEP). Low complexity-rich tracts occupy residues 14 to 24 (IPQPTITPPTQ), 46 to 79 (NKNNRNNKNNVDNNNNNNNNNNNNEKQNQTNVNN), and 93 to 124 (NNNNNNNNNNNNNNNNNNNNNNKNKYNKFNDN). 2 stretches are compositionally biased toward basic and acidic residues: residues 182 to 196 (EAKKKEEEDARKRGE) and 209 to 218 (QTPDKKKKLE). The segment covering 221 to 257 (TSKNNNKSSTTKTELTNTTTNTSSTTNPTTDTTTTTT) has biased composition (low complexity). 2 stretches are compositionally biased toward basic and acidic residues: residues 265 to 274 (ENENQEKENN) and 292 to 303 (NKFEEKPIKEVK). The segment covering 311–320 (KRNKKRNNPK) has biased composition (basic residues).

This is an uncharacterized protein from Dictyostelium discoideum (Social amoeba).